Consider the following 61-residue polypeptide: Potassium channel toxin alpha-KTx 6.6 (61 aa).

An N-terminal signal peptide occupies residues 1–23 (MNAKFILLLLVVATTMLLPDTQG). 4 disulfides stabilise this stretch: C29–C50, C35–C55, C39–C57, and C45–C60. C60 is modified (cysteine amide).

Belongs to the short scorpion toxin superfamily. Potassium channel inhibitor family. Alpha-KTx 06 subfamily. As to expression, expressed by the venom gland.

It localises to the secreted. Functionally, blocker of voltage-gated potassium channels. The polypeptide is Potassium channel toxin alpha-KTx 6.6 (Opistophthalmus carinatus (African yellow leg scorpion)).